We begin with the raw amino-acid sequence, 840 residues long: Probable alpha-glucuronidase A (840 aa).

A signal peptide spans 1-19; it reads MRSVITTLTLVASVGLAVA. 7 N-linked (GlcNAc...) asparagine glycosylation sites follow: N222, N310, N465, N527, N576, N682, and N732.

This sequence belongs to the glycosyl hydrolase 67 family.

The protein resides in the secreted. The enzyme catalyses an alpha-D-glucuronoside + H2O = D-glucuronate + an alcohol. Its function is as follows. Alpha-glucuronidase involved in the hydrolysis of xylan, a major structural heterogeneous polysaccharide found in plant biomass representing the second most abundant polysaccharide in the biosphere, after cellulose. Releases 4-O-methylglucuronic acid from xylan. The polypeptide is Probable alpha-glucuronidase A (aguA) (Aspergillus clavatus (strain ATCC 1007 / CBS 513.65 / DSM 816 / NCTC 3887 / NRRL 1 / QM 1276 / 107)).